The following is a 317-amino-acid chain: Beta-ketoacyl-[acyl-carrier-protein] synthase III (317 aa).

Catalysis depends on residues Cys112 and His244. Residues 245–249 are ACP-binding; the sequence is QANLR. Asn274 is an active-site residue.

The protein belongs to the thiolase-like superfamily. FabH family. Homodimer.

It localises to the cytoplasm. The enzyme catalyses malonyl-[ACP] + acetyl-CoA + H(+) = 3-oxobutanoyl-[ACP] + CO2 + CoA. It participates in lipid metabolism; fatty acid biosynthesis. Functionally, catalyzes the condensation reaction of fatty acid synthesis by the addition to an acyl acceptor of two carbons from malonyl-ACP. Catalyzes the first condensation reaction which initiates fatty acid synthesis and may therefore play a role in governing the total rate of fatty acid production. Possesses both acetoacetyl-ACP synthase and acetyl transacylase activities. Its substrate specificity determines the biosynthesis of branched-chain and/or straight-chain of fatty acids. This Escherichia coli O9:H4 (strain HS) protein is Beta-ketoacyl-[acyl-carrier-protein] synthase III.